The following is a 215-amino-acid chain: UPF0441 protein SG0265 (215 aa).

This sequence belongs to the UPF0441 family.

The chain is UPF0441 protein SG0265 from Sodalis glossinidius (strain morsitans).